Here is a 946-residue protein sequence, read N- to C-terminus: DNA primase (946 aa).

Residues 596-626 (RDTEEDEDGKEDKNNVPGNGVFQKTTSSVDT) are disordered. Residues 617–626 (FQKTTSSVDT) show a composition bias toward polar residues. The segment at 881–920 (CLNYTHRNPQETVQVFIDLRTEHSYALWASLWSRCFTKKC) adopts a CHC2-type zinc-finger fold.

Belongs to the herpesviridae DNA primase family. In terms of assembly, associates with the helicase and the primase-associated factor to form the helicase-primase factor.

It localises to the host nucleus. Essential component of the helicase/primase complex. Unwinds the DNA at the replication forks and generates single-stranded DNA for both leading and lagging strand synthesis. The primase initiates primer synthesis and thereby produces large amount of short RNA primers on the lagging strand that the polymerase elongates using dNTPs. This is DNA primase (UL70) from Human cytomegalovirus (strain Merlin) (HHV-5).